A 432-amino-acid chain; its full sequence is Serine hydroxymethyltransferase (432 aa).

Residues L131 and 135-137 (GHL) each bind (6S)-5,6,7,8-tetrahydrofolate. K240 is subject to N6-(pyridoxal phosphate)lysine.

It belongs to the SHMT family. In terms of assembly, homodimer. Pyridoxal 5'-phosphate is required as a cofactor.

Its subcellular location is the cytoplasm. The catalysed reaction is (6R)-5,10-methylene-5,6,7,8-tetrahydrofolate + glycine + H2O = (6S)-5,6,7,8-tetrahydrofolate + L-serine. It participates in one-carbon metabolism; tetrahydrofolate interconversion. It functions in the pathway amino-acid biosynthesis; glycine biosynthesis; glycine from L-serine: step 1/1. Its function is as follows. Catalyzes the reversible interconversion of serine and glycine with tetrahydrofolate (THF) serving as the one-carbon carrier. This reaction serves as the major source of one-carbon groups required for the biosynthesis of purines, thymidylate, methionine, and other important biomolecules. Also exhibits THF-independent aldolase activity toward beta-hydroxyamino acids, producing glycine and aldehydes, via a retro-aldol mechanism. In Acidiphilium cryptum (strain JF-5), this protein is Serine hydroxymethyltransferase.